The chain runs to 1153 residues: Otoancorin (1153 aa).

The N-terminal stretch at 1-22 is a signal peptide; sequence MSQEPTTYSLFLFLFLSHGVSS. Residue Asn-156 is glycosylated (N-linked (GlcNAc...) asparagine). Asn-211 is a glycosylation site (N-linked (GlcNAc...) (complex) asparagine). Residues Asn-244, Asn-289, Asn-321, Asn-394, Asn-398, Asn-460, Asn-544, Asn-812, Asn-911, and Asn-974 are each glycosylated (N-linked (GlcNAc...) asparagine). Residues 1109 to 1128 form a disordered region; it reads HSWQDAPASAGPTRTSSSRS. Ala-1130 is lipidated: GPI-anchor amidated alanine. Residues 1131–1153 constitute a propeptide, removed in mature form; it reads GALQSWGLWLGCPLLVLMAKLLW.

The protein belongs to the stereocilin family.

The protein localises to the apical cell membrane. It is found in the secreted. Its subcellular location is the extracellular space. It localises to the extracellular matrix. Functionally, may act as an adhesion molecule. The sequence is that of Otoancorin (OTOA) from Homo sapiens (Human).